Here is a 461-residue protein sequence, read N- to C-terminus: MTKEQTWSQRFESALHPAIARFNASIGFDIELIEYDLTGSQAHAKMLAHTGIISSEEGEQLVAGLEQIRQEHRQGKFHPGVDAEDVHFAVEKRLTEIVGDVGKKLHTARSRNDQVGTDTRLYLRDQIQQIKSELREFQGVLLDIAEKHVETLIPGYTHLQRAQPVSLAHHLLAYFQMAQRDWERLGDVSRRVNISPLGCGALAGTTFPIDRHYTAKLLDFDNIYANSLDGVSDRDFAIEFLCAASLIMVHLSRLAEEVILWSSEEFRFVILKDSCATGSSIMPQKKNPDVPELVRGKTGRVFGHLQAMLVIMKGLPLAYNKDLQEDKEGLFDSVNTVKASLEAMTILLREGLEFRTQRLAQAVTEDFSNATDVADYLAARGVPFREAYNLVGKVVKTSIAAGKLLKDLELEEWQQLHPAFAADIYEAISPRQVVAARNSHGGTGFVQVSKALIAARAQIDQ.

The protein belongs to the lyase 1 family. Argininosuccinate lyase subfamily. In terms of assembly, homotetramer.

Its subcellular location is the cytoplasm. It carries out the reaction 2-(N(omega)-L-arginino)succinate = fumarate + L-arginine. The protein operates within amino-acid biosynthesis; L-arginine biosynthesis; L-arginine from L-ornithine and carbamoyl phosphate: step 3/3. This is Argininosuccinate lyase from Nostoc punctiforme (strain ATCC 29133 / PCC 73102).